The sequence spans 411 residues: Secretion apparatus protein BsaZ (411 aa).

4 consecutive transmembrane segments (helical) span residues 28 to 48 (IVALIVIATGALAAPALVDLT), 80 to 100 (IAAPFVLLCAAAGALPSLVQS), 137 to 157 (ALLYVGVFALTVRVFADLYHA), and 175 to 195 (IVLTVRLVLLFLLCALPVLIL). The segment at 341–411 (AANRGGPPPE…APARTGDQNA (71 aa)) is disordered. The segment covering 370-404 (DACADNAFPDDAPPGAAAPNAGSPDSPAPDGGAPA) has biased composition (low complexity).

Belongs to the type III secretion exporter family.

Its subcellular location is the cell membrane. Its function is as follows. Part of the bsa type III secretion system, is involved in the intracellular replication of invading bacteria inside the host cell. Probably necessary for the lysis of the vacuole membrane and escape into the host cell cytoplasm. This chain is Secretion apparatus protein BsaZ (bsaZ), found in Burkholderia pseudomallei (strain 1106a).